The following is a 75-amino-acid chain: Exodeoxyribonuclease 7 small subunit (75 aa).

Belongs to the XseB family. Heterooligomer composed of large and small subunits.

Its subcellular location is the cytoplasm. The enzyme catalyses Exonucleolytic cleavage in either 5'- to 3'- or 3'- to 5'-direction to yield nucleoside 5'-phosphates.. In terms of biological role, bidirectionally degrades single-stranded DNA into large acid-insoluble oligonucleotides, which are then degraded further into small acid-soluble oligonucleotides. This Elusimicrobium minutum (strain Pei191) protein is Exodeoxyribonuclease 7 small subunit.